A 37-amino-acid polypeptide reads, in one-letter code: Large ribosomal subunit protein bL36 (37 aa).

Belongs to the bacterial ribosomal protein bL36 family.

The protein is Large ribosomal subunit protein bL36 of Mycoplasmopsis pulmonis (strain UAB CTIP) (Mycoplasma pulmonis).